Consider the following 315-residue polypeptide: MQIKLANPRGFCAGVDRAIEIVNRALEVFGPPIYVRHEVVHNKFVVEDLRNRGAIFVEELDQVPDDVIVIFSAHGVSQAVRSEAAGRGLKVFDATCPLVTKVHIEVARYSRDGRECILIGHAGHPEVEGTMGQYDASNGGAIYLVEDEKDVAELQVRNPERLAFVTQTTLSMDDTSRVIDALRTRFPAIGGPRKDDICYATQNRQDAVKQLADECDVVLVVGSPNSSNSNRLRELAERMATPAYLIDGAEDLQRSWFDGVERIGITAGASAPEVLVRGVIQQLQAWGATGADELAGREENITFSMPKELRVRSLL.

Cys12 serves as a coordination point for [4Fe-4S] cluster. The (2E)-4-hydroxy-3-methylbut-2-enyl diphosphate site is built by His41 and His74. Dimethylallyl diphosphate is bound by residues His41 and His74. His41 and His74 together coordinate isopentenyl diphosphate. Cys96 provides a ligand contact to [4Fe-4S] cluster. A (2E)-4-hydroxy-3-methylbut-2-enyl diphosphate-binding site is contributed by His124. Residue His124 coordinates dimethylallyl diphosphate. His124 is an isopentenyl diphosphate binding site. Glu126 serves as the catalytic Proton donor. (2E)-4-hydroxy-3-methylbut-2-enyl diphosphate is bound at residue Thr168. A [4Fe-4S] cluster-binding site is contributed by Cys198. (2E)-4-hydroxy-3-methylbut-2-enyl diphosphate contacts are provided by Ser226, Ser227, Asn228, and Ser270. Ser226, Ser227, Asn228, and Ser270 together coordinate dimethylallyl diphosphate. Isopentenyl diphosphate contacts are provided by Ser226, Ser227, Asn228, and Ser270.

It belongs to the IspH family. It depends on [4Fe-4S] cluster as a cofactor.

It carries out the reaction isopentenyl diphosphate + 2 oxidized [2Fe-2S]-[ferredoxin] + H2O = (2E)-4-hydroxy-3-methylbut-2-enyl diphosphate + 2 reduced [2Fe-2S]-[ferredoxin] + 2 H(+). The enzyme catalyses dimethylallyl diphosphate + 2 oxidized [2Fe-2S]-[ferredoxin] + H2O = (2E)-4-hydroxy-3-methylbut-2-enyl diphosphate + 2 reduced [2Fe-2S]-[ferredoxin] + 2 H(+). Its pathway is isoprenoid biosynthesis; dimethylallyl diphosphate biosynthesis; dimethylallyl diphosphate from (2E)-4-hydroxy-3-methylbutenyl diphosphate: step 1/1. The protein operates within isoprenoid biosynthesis; isopentenyl diphosphate biosynthesis via DXP pathway; isopentenyl diphosphate from 1-deoxy-D-xylulose 5-phosphate: step 6/6. In terms of biological role, catalyzes the conversion of 1-hydroxy-2-methyl-2-(E)-butenyl 4-diphosphate (HMBPP) into a mixture of isopentenyl diphosphate (IPP) and dimethylallyl diphosphate (DMAPP). Acts in the terminal step of the DOXP/MEP pathway for isoprenoid precursor biosynthesis. The sequence is that of 4-hydroxy-3-methylbut-2-enyl diphosphate reductase from Pseudomonas fluorescens (strain ATCC BAA-477 / NRRL B-23932 / Pf-5).